A 634-amino-acid chain; its full sequence is Growth hormone receptor (634 aa).

Positions 1 to 18 (MDLWQLLLTLAVAGSSDA) are cleaved as a signal peptide. Over 19-260 (FSGSEATPAF…NPSACEEDFQ (242 aa)) the chain is Extracellular. Asparagine 46 carries an N-linked (GlcNAc...) asparagine glycan. Cysteine 56 and cysteine 66 are oxidised to a cystine. A glycan (N-linked (GlcNAc...) asparagine) is linked at asparagine 73. Cysteine 97 and cysteine 108 are oxidised to a cystine. Residue asparagine 111 is glycosylated (N-linked (GlcNAc...) asparagine). The cysteines at positions 122 and 136 are disulfide-linked. The 104-residue stretch at 147-250 (PPVGLNWTLL…EVLLITFPQM (104 aa)) folds into the Fibronectin type-III domain. Residues asparagine 152, asparagine 157, and asparagine 196 are each glycosylated (N-linked (GlcNAc...) asparagine). The WSXWS motif motif lies at 236–240 (YGKFS). The chain crosses the membrane as a helical span at residues 261 to 284 (FPWFLIIMFGILGLAVTLFLLIFS). Residues 285–634 (KQQRIKMLIL…STDQLNKIMP (350 aa)) are Cytoplasmic-facing. The segment at 290-375 (KMLILPPVPV…HEKSLNIFGA (86 aa)) is required for JAK2 binding. Residues 293–301 (ILPPVPVPK) carry the Box 1 motif motif. Positions 336-345 (DSWVEFIELD) match the UbE motif motif. Serine 337 is subject to Phosphoserine. 2 positions are modified to phosphotyrosine: tyrosine 483 and tyrosine 591.

This sequence belongs to the type I cytokine receptor family. Type 1 subfamily. On growth hormone (GH) binding, forms homodimers and binds JAK2 via a box 1-containing domain. The soluble form (GHBP) is produced by phorbol ester-promoted proteolytic cleavage at the cell surface (shedding) by ADAM17/TACE. Shedding is inhibited by growth hormone (GH) binding to the receptor probably due to a conformational change in GHR rendering the receptor inaccessible to ADAM17. In terms of processing, on GH binding, phosphorylated on tyrosine residues in the cytoplasmic domain by JAK2. Post-translationally, ubiquitinated by the ECS(SOCS2) complex following ligand-binding and phosphorylation by JAK2, leading to its degradation by the proteasome. Regulation by the ECS(SOCS2) complex acts as a negative feedback loop of growth hormone receptor signaling. Ubiquitination is not sufficient for GHR internalization.

The protein resides in the cell membrane. It is found in the secreted. In terms of biological role, receptor for pituitary gland growth hormone (GH1) involved in regulating postnatal body growth. On ligand binding, couples to the JAK2/STAT5 pathway. The soluble form (GHBP) acts as a reservoir of growth hormone in plasma and may be a modulator/inhibitor of GH signaling. The chain is Growth hormone receptor (GHR) from Bos indicus (Zebu).